The sequence spans 200 residues: MAEEPKETGPGFQNPVAGFGVTFKAMFKKRLTEQYPEQQKTTAPRFHGRHQLNRHPDGLEKCVGCELCAWACPADAIYVEGADNTDEERYSPGERYGRVYQINYARCILCGLCIEACPTRALTMTNEFELADSSRANLIYTKEQLLAGLDDNMVDSPHAIYPGMDEQDYYRGLVTEAAPGTERQVAVSKGEKPQDEGVEA.

4Fe-4S ferredoxin-type domains are found at residues 52–82 and 98–127; these read LNRH…VEGA and RVYQ…MTNE. Cysteine 62, cysteine 65, cysteine 68, cysteine 72, cysteine 107, cysteine 110, cysteine 113, and cysteine 117 together coordinate [4Fe-4S] cluster. Residues 181 to 200 are disordered; the sequence is TERQVAVSKGEKPQDEGVEA. Over residues 189–200 the composition is skewed to basic and acidic residues; that stretch reads KGEKPQDEGVEA.

Belongs to the complex I 23 kDa subunit family. NDH-1 is composed of 14 different subunits. Subunits NuoA, H, J, K, L, M, N constitute the membrane sector of the complex. It depends on [4Fe-4S] cluster as a cofactor.

The protein resides in the cell membrane. It catalyses the reaction a quinone + NADH + 5 H(+)(in) = a quinol + NAD(+) + 4 H(+)(out). In terms of biological role, NDH-1 shuttles electrons from NADH, via FMN and iron-sulfur (Fe-S) centers, to quinones in the respiratory chain. The immediate electron acceptor for the enzyme in this species is believed to be ubiquinone. Couples the redox reaction to proton translocation (for every two electrons transferred, four hydrogen ions are translocated across the cytoplasmic membrane), and thus conserves the redox energy in a proton gradient. This Streptomyces avermitilis (strain ATCC 31267 / DSM 46492 / JCM 5070 / NBRC 14893 / NCIMB 12804 / NRRL 8165 / MA-4680) protein is NADH-quinone oxidoreductase subunit I 1.